A 165-amino-acid chain; its full sequence is 2-C-methyl-D-erythritol 2,4-cyclodiphosphate synthase (165 aa).

Positions 12 and 14 each coordinate a divalent metal cation. 4-CDP-2-C-methyl-D-erythritol 2-phosphate-binding positions include 12–14 (DVH) and 38–39 (HS). Position 46 (His-46) interacts with a divalent metal cation. Residues 60-62 (DIG), 65-69 (FPDTD), Phe-143, and Arg-146 contribute to the 4-CDP-2-C-methyl-D-erythritol 2-phosphate site.

It belongs to the IspF family. As to quaternary structure, homotrimer. The cofactor is a divalent metal cation.

It carries out the reaction 4-CDP-2-C-methyl-D-erythritol 2-phosphate = 2-C-methyl-D-erythritol 2,4-cyclic diphosphate + CMP. Its pathway is isoprenoid biosynthesis; isopentenyl diphosphate biosynthesis via DXP pathway; isopentenyl diphosphate from 1-deoxy-D-xylulose 5-phosphate: step 4/6. Its function is as follows. Involved in the biosynthesis of isopentenyl diphosphate (IPP) and dimethylallyl diphosphate (DMAPP), two major building blocks of isoprenoid compounds. Catalyzes the conversion of 4-diphosphocytidyl-2-C-methyl-D-erythritol 2-phosphate (CDP-ME2P) to 2-C-methyl-D-erythritol 2,4-cyclodiphosphate (ME-CPP) with a corresponding release of cytidine 5-monophosphate (CMP). The chain is 2-C-methyl-D-erythritol 2,4-cyclodiphosphate synthase from Aromatoleum aromaticum (strain DSM 19018 / LMG 30748 / EbN1) (Azoarcus sp. (strain EbN1)).